The sequence spans 467 residues: Protein PHOSPHATE STARVATION RESPONSE 3 (467 aa).

The disordered stretch occupies residues 227–266 (MSLPVSSCSDQEDLQDARSPAKVQLSSSRSSSGTASCNKP). Residues 262-322 (SCNKPRLRWT…HLQKYRLAKY (61 aa)) enclose the HTH myb-type domain. Positions 293 to 318 (PKGVLKLMKVEGLTIYHIKSHLQKYR) form a DNA-binding region, H-T-H motif. Over residues 327–337 (KEDKKQEEKKT) the composition is skewed to basic and acidic residues. Disordered regions lie at residues 327-353 (KEDKKQEEKKTKSVANGNDHAKKKSAQ) and 400-467 (RESI…VHDE). Residues 402 to 412 (SISSMTSTTEG) show a composition bias toward polar residues. Composition is skewed to basic and acidic residues over residues 419–428 (PMEKTEDKAE) and 438–467 (RITDTDAECHSKVDNKKTKPQADLEMVHDE).

It localises to the nucleus. Transcription factor involved in phosphate starvation signaling. Binds to P1BS, an imperfect palindromic sequence 5'-GNATATNC-3', to promote the expression of inorganic phosphate (Pi) starvation-responsive genes. Functionally redundant with PHR1 and PHR2 in regulating Pi starvation response and Pi homeostasis. The sequence is that of Protein PHOSPHATE STARVATION RESPONSE 3 from Oryza sativa subsp. indica (Rice).